A 409-amino-acid polypeptide reads, in one-letter code: Na(+)/H(+) antiporter NhaA 2 (409 aa).

A run of 12 helical transmembrane segments spans residues 10-30 (VAAG…NTPA), 60-80 (GLLV…FLAG), 89-109 (LVPA…YLAI), 118-138 (GWPV…AVFG), 148-168 (FLLA…AVFF), 171-191 (GLDL…AVVG), 203-223 (IAVV…TLSS), 224-244 (GIHA…LSGL), 257-277 (IVLP…IGLA), 283-303 (FWGI…AGGL), 328-348 (LLGG…FAGL), and 356-376 (TLAV…TLSI). The segment at 384-409 (AGAAADDDDATRDDFPAHADGGPARA) is disordered.

The protein belongs to the NhaA Na(+)/H(+) (TC 2.A.33) antiporter family.

It localises to the cell membrane. It carries out the reaction Na(+)(in) + 2 H(+)(out) = Na(+)(out) + 2 H(+)(in). Functionally, na(+)/H(+) antiporter that extrudes sodium in exchange for external protons. The protein is Na(+)/H(+) antiporter NhaA 2 of Clavibacter michiganensis subsp. michiganensis (strain NCPPB 382).